The following is a 626-amino-acid chain: Ankyrin repeat domain-containing protein 13B (626 aa).

M1 is modified (N-acetylmethionine). ANK repeat units lie at residues R47 to R76 and S80 to V109. The disordered stretch occupies residues P442 to T470. Residues G448 to T470 are compositionally biased toward low complexity. Residues E503–E522 enclose the UIM 1 domain. A disordered region spans residues N534–E614. Over residues P554 to G575 the composition is skewed to pro residues. UIM domains follow at residues S585–R604 and Q610–Q626.

As to quaternary structure, interacts with EGFR (ubiquitinated); the interaction is direct and may regulate EGFR internalization.

It localises to the cell membrane. It is found in the late endosome. The protein resides in the early endosome. In terms of biological role, ubiquitin-binding protein that specifically recognizes and binds 'Lys-63'-linked ubiquitin. Does not bind 'Lys-48'-linked ubiquitin. Positively regulates the internalization of ligand-activated EGFR by binding to the Ub moiety of ubiquitinated EGFR at the cell membrane. The polypeptide is Ankyrin repeat domain-containing protein 13B (Ankrd13b) (Mus musculus (Mouse)).